Consider the following 497-residue polypeptide: Probable malate:quinone oxidoreductase (497 aa).

Belongs to the MQO family. Requires FAD as cofactor.

The enzyme catalyses (S)-malate + a quinone = a quinol + oxaloacetate. The protein operates within carbohydrate metabolism; tricarboxylic acid cycle; oxaloacetate from (S)-malate (quinone route): step 1/1. The sequence is that of Probable malate:quinone oxidoreductase from Hahella chejuensis (strain KCTC 2396).